A 121-amino-acid polypeptide reads, in one-letter code: uncharacterized protein (121 aa).

Residues 9–29 form a helical membrane-spanning segment; it reads LTILIASIYIIFFVNAAPTLY. Positions 91-121 are disordered; the sequence is EELPTYPPTMTTPLETTPLDTSPPVLPSAIP. Low complexity predominate over residues 98-113; the sequence is PTMTTPLETTPLDTSP.

The protein localises to the host membrane. This is an uncharacterized protein from Alcelaphine herpesvirus 1 (strain C500) (AlHV-1).